We begin with the raw amino-acid sequence, 187 residues long: DNA-3-methyladenine glycosylase 1 (187 aa).

Positions 4, 17, 175, and 179 each coordinate Zn(2+).

It catalyses the reaction Hydrolysis of alkylated DNA, releasing 3-methyladenine.. With respect to regulation, activity is controlled by product inhibition. In terms of biological role, hydrolysis of the deoxyribose N-glycosidic bond to excise 3-methyladenine from the damaged DNA polymer formed by alkylation lesions. This chain is DNA-3-methyladenine glycosylase 1, found in Escherichia coli (strain K12).